The primary structure comprises 294 residues: tRNA-cytidine(32) 2-sulfurtransferase (294 aa).

The short motif at 58 to 63 (SGGKDS) is the PP-loop motif element. Residues C133, C136, and C224 each contribute to the [4Fe-4S] cluster site.

Belongs to the TtcA family. As to quaternary structure, homodimer. Requires Mg(2+) as cofactor. [4Fe-4S] cluster serves as cofactor.

It is found in the cytoplasm. The enzyme catalyses cytidine(32) in tRNA + S-sulfanyl-L-cysteinyl-[cysteine desulfurase] + AH2 + ATP = 2-thiocytidine(32) in tRNA + L-cysteinyl-[cysteine desulfurase] + A + AMP + diphosphate + H(+). Its pathway is tRNA modification. In terms of biological role, catalyzes the ATP-dependent 2-thiolation of cytidine in position 32 of tRNA, to form 2-thiocytidine (s(2)C32). The sulfur atoms are provided by the cysteine/cysteine desulfurase (IscS) system. This Ruegeria pomeroyi (strain ATCC 700808 / DSM 15171 / DSS-3) (Silicibacter pomeroyi) protein is tRNA-cytidine(32) 2-sulfurtransferase.